Reading from the N-terminus, the 317-residue chain is MSFSAETKDELARIEEGKRCCNLAELAALVRMDGTLQIANHSYALNVITESAPVARKVYRLAKNLLGLPVDIMVRRKLRLKKNNSYMVKIYPRTLEDLQQLGLLDEEGEILPGIPNVLVKKKCDRIAYLRGAFLAGGSINNPEGTYHLEIITNDSLHAEALSKLLNKFHLGAKVSMRKSWHVVYIKESEHIVEFLGFIGAHRALLEFENVRVLKDMRNQVNRLVNCETANLNKTVDAAVRQVENIQRVANTIGLQALPEPLREIAELRLEYPDASLKELGEMLVPKVGKSGVNHRMRKIDELAEKLEEQSKRVRKGG.

Positions 275 to 308 (SLKELGEMLVPKVGKSGVNHRMRKIDELAEKLEE) form a DNA-binding region, H-T-H motif.

Belongs to the WhiA family.

In terms of biological role, involved in cell division and chromosome segregation. This chain is Probable cell division protein WhiA, found in Desulfitobacterium hafniense (strain Y51).